Reading from the N-terminus, the 392-residue chain is ATP phosphoribosyltransferase regulatory subunit (392 aa).

Belongs to the class-II aminoacyl-tRNA synthetase family. HisZ subfamily. As to quaternary structure, heteromultimer composed of HisG and HisZ subunits.

The protein resides in the cytoplasm. It participates in amino-acid biosynthesis; L-histidine biosynthesis; L-histidine from 5-phospho-alpha-D-ribose 1-diphosphate: step 1/9. Its function is as follows. Required for the first step of histidine biosynthesis. May allow the feedback regulation of ATP phosphoribosyltransferase activity by histidine. The sequence is that of ATP phosphoribosyltransferase regulatory subunit from Synechococcus sp. (strain CC9902).